Here is a 581-residue protein sequence, read N- to C-terminus: MFVYPLLISSILNMDMITSFISQHPKYNFLHYLNSGQNGSRQNLTNQIILLEKQTKIPTIAMYVFTKIFDNKIWEIPTNELCQGLVILFGKLGIKKINELAAGNGLLSARLKYFATKMNYVLDIDTSDGTNKMFGKHPFTFVPVREMNIRCYDKSEPIIISWLHCQFEDELLKSIKKHKQDYIFLIGDYPDSGGYNNTHSRHFHSKITSYKYGYWYKVISFNQLSQMDYFINDKIRKDMFVDCRTCVTLYYRIDREYNVAHIVSAVDSVQYEYPNLFGNYMDKNKEYYDQDWTVIKSTDNTIKNYMKNDYQGLDSIIIDGLKPYAEDKFCFERVNMFRIKRTDFDDVMDLFPIGMLNRQSQWSLPGYRRSPLSATAIASAYDSDIDPYTPSKIISKMFEDTSKIENEFIEHGSAQENSEMIHLKFATQLYSMMMQVHLSIMMSEQPLIMMPEQSSDMIDPFLNIIEPYWHTPLIEQKVLRAVRFSGHRIIDFDNNVLCSENYLVGQDINQKLDKNIYFSKRSYIDYPFGESQYFRDIETVYNILKRQDKLTKKIDNNRIFITNYPKHNRNHKTISRRTRYH.

This is an uncharacterized protein from Acanthamoeba polyphaga mimivirus (APMV).